The following is a 461-amino-acid chain: Argininosuccinate lyase (461 aa).

This sequence belongs to the lyase 1 family. Argininosuccinate lyase subfamily.

Its subcellular location is the cytoplasm. It carries out the reaction 2-(N(omega)-L-arginino)succinate = fumarate + L-arginine. It functions in the pathway amino-acid biosynthesis; L-arginine biosynthesis; L-arginine from L-ornithine and carbamoyl phosphate: step 3/3. The sequence is that of Argininosuccinate lyase from Streptococcus gordonii (strain Challis / ATCC 35105 / BCRC 15272 / CH1 / DL1 / V288).